We begin with the raw amino-acid sequence, 609 residues long: uncharacterized protein (609 aa).

It belongs to the NodU/CmcH family.

This is an uncharacterized protein from Methanocaldococcus jannaschii (strain ATCC 43067 / DSM 2661 / JAL-1 / JCM 10045 / NBRC 100440) (Methanococcus jannaschii).